Reading from the N-terminus, the 264-residue chain is NAD kinase 1 (264 aa).

The active-site Proton acceptor is D45. NAD(+)-binding positions include 45 to 46 (DG), G46, 122 to 123 (NE), R148, D150, S158, 161 to 166 (TAYNKS), and H223.

The protein belongs to the NAD kinase family. Homotetramer. A divalent metal cation is required as a cofactor.

It localises to the cytoplasm. The catalysed reaction is NAD(+) + ATP = ADP + NADP(+) + H(+). With respect to regulation, competitively inhibited by 5'-thioacetyladenosine (TAA) and di-(5'-thioadenosine) (DTA). Functionally, involved in the regulation of the intracellular balance of NAD and NADP, and is a key enzyme in the biosynthesis of NADP. Catalyzes specifically the phosphorylation on 2'-hydroxyl of the adenosine moiety of NAD to yield NADP. The sequence is that of NAD kinase 1 from Listeria monocytogenes serovar 1/2a (strain ATCC BAA-679 / EGD-e).